Consider the following 399-residue polypeptide: Methylthioribose kinase (399 aa).

ATP-binding positions include N40, K57, and 111 to 113 (EDL). D229 serves as a coordination point for substrate. An ATP-binding site is contributed by 246–248 (DAE). Residue R344 participates in substrate binding.

It belongs to the methylthioribose kinase family. Homodimer.

It catalyses the reaction 5-(methylsulfanyl)-D-ribose + ATP = 5-(methylsulfanyl)-alpha-D-ribose 1-phosphate + ADP + H(+). Its pathway is amino-acid biosynthesis; L-methionine biosynthesis via salvage pathway; S-methyl-5-thio-alpha-D-ribose 1-phosphate from S-methyl-5'-thioadenosine (hydrolase route): step 2/2. Catalyzes the phosphorylation of methylthioribose into methylthioribose-1-phosphate. This chain is Methylthioribose kinase, found in Klebsiella pneumoniae subsp. pneumoniae (strain ATCC 700721 / MGH 78578).